The following is a 143-amino-acid chain: Deoxyuridine 5'-triphosphate nucleotidohydrolase (143 aa).

Residues Ser-65, Val-78, Arg-132, and Gly-138 each contribute to the dUMP site.

Belongs to the dUTPase family. In terms of assembly, homotrimer. The cofactor is Mg(2+).

It catalyses the reaction dUTP + H2O = dUMP + diphosphate + H(+). It functions in the pathway pyrimidine metabolism; dUMP biosynthesis; dUMP from dCTP (dUTP route): step 2/2. In terms of biological role, involved in nucleotide metabolism via production of dUMP, the immediate precursor of thymidine nucleotides, and decreases the intracellular concentration of dUTP so that uracil cannot be incorporated into DNA. The sequence is that of Deoxyuridine 5'-triphosphate nucleotidohydrolase (DUT1) from Antonospora locustae (Microsporidian parasite).